We begin with the raw amino-acid sequence, 447 residues long: Divalent metal cation transporter MntH (447 aa).

The next 11 membrane-spanning stretches (helical) occupy residues 26 to 48 (AGFWKTLMAYSGPGFLIAVGYMD), 65 to 85 (TLLSVILLSSLIAMLLQAMSA), 108 to 128 (GFLLWIVAELAIMATDIAEII), 140 to 160 (IPLIIGILITAADVLILLLLM), 169 to 189 (AIVATLVAVILIVFAYEVLLS), 212 to 232 (MLYLSLGIVGATVMPHDLYLG), 264 to 284 (LFLAFIVNSLLLILGAALFYG), 304 to 324 (IVGAIASPVLSMLFAVALLAS), 359 to 379 (VLSVAPVLIFAIYYHGDEAKI), 383 to 403 (LTFSQVFLSVALPFAVIPLVI), and 426 to 446 (TATIVLILLNIYLILQTLGLI).

Belongs to the NRAMP family.

The protein resides in the cell membrane. Its function is as follows. H(+)-stimulated, divalent metal cation uptake system. The protein is Divalent metal cation transporter MntH of Pediococcus pentosaceus (strain ATCC 25745 / CCUG 21536 / LMG 10740 / 183-1w).